Here is a 109-residue protein sequence, read N- to C-terminus: Nucleoid-associated protein BCE_0021 (109 aa).

The protein belongs to the YbaB/EbfC family. In terms of assembly, homodimer.

Its subcellular location is the cytoplasm. The protein localises to the nucleoid. Functionally, binds to DNA and alters its conformation. May be involved in regulation of gene expression, nucleoid organization and DNA protection. The chain is Nucleoid-associated protein BCE_0021 from Bacillus cereus (strain ATCC 10987 / NRS 248).